We begin with the raw amino-acid sequence, 776 residues long: Protein STRUBBELIG-RECEPTOR FAMILY 3 (776 aa).

The signal sequence occupies residues methionine 1 to alanine 29. Topologically, residues alanine 30–aspartate 35 are cytoplasmic. Residues valine 36–alanine 56 traverse the membrane as a helical segment. The Extracellular segment spans residues serine 57–lysine 316. N-linked (GlcNAc...) asparagine glycosylation occurs at asparagine 72. 6 LRR repeats span residues serine 99 to valine 120, threonine 121 to leucine 143, phenylalanine 145 to leucine 167, glycine 169 to leucine 191, threonine 193 to proline 215, and leucine 216 to serine 236. A glycan (N-linked (GlcNAc...) asparagine) is linked at asparagine 179. 2 N-linked (GlcNAc...) asparagine glycosylation sites follow: asparagine 248 and asparagine 253. A disordered region spans residues methionine 251–serine 311. Residues serine 254 to threonine 268 show a composition bias toward low complexity. The segment covering lysine 269–asparagine 284 has biased composition (pro residues). The segment covering serine 298–lysine 309 has biased composition (low complexity). A glycan (N-linked (GlcNAc...) asparagine) is linked at asparagine 310. Residues isoleucine 317–leucine 337 form a helical membrane-spanning segment. Topologically, residues leucine 338 to aspartate 776 are cytoplasmic. The segment at proline 355–proline 440 is disordered. Basic and acidic residues predominate over residues arginine 381–arginine 407. Pro residues predominate over residues methionine 426–proline 440. The region spanning phenylalanine 485–isoleucine 763 is the Protein kinase domain. ATP is bound by residues isoleucine 491–valine 499 and lysine 513.

This sequence belongs to the protein kinase superfamily. Ser/Thr protein kinase family. As to expression, expressed in seedlings, roots, stems, leaves, flowers and siliques.

The protein resides in the membrane. Functionally, not essential for epidermal patterning and not redundant with STRUBBELIG. The polypeptide is Protein STRUBBELIG-RECEPTOR FAMILY 3 (SRF3) (Arabidopsis thaliana (Mouse-ear cress)).